The sequence spans 240 residues: Uridylate kinase (240 aa).

13–16 (KLSG) serves as a coordination point for ATP. Residues 21-26 (GEKGFG) form an involved in allosteric activation by GTP region. Gly-55 is a UMP binding site. Positions 56 and 60 each coordinate ATP. UMP is bound by residues Asp-75 and 136–143 (IGNPYFST). Residues Asn-164, Tyr-170, and Asp-173 each coordinate ATP.

Belongs to the UMP kinase family. In terms of assembly, homohexamer.

The protein localises to the cytoplasm. It catalyses the reaction UMP + ATP = UDP + ADP. It functions in the pathway pyrimidine metabolism; CTP biosynthesis via de novo pathway; UDP from UMP (UMPK route): step 1/1. Its activity is regulated as follows. Allosterically activated by GTP. Inhibited by UTP. Catalyzes the reversible phosphorylation of UMP to UDP. The sequence is that of Uridylate kinase from Staphylococcus aureus (strain USA300).